Here is a 674-residue protein sequence, read N- to C-terminus: Methionine--tRNA ligase (674 aa).

Residues 12–22 (PYANGPIHLGH) carry the 'HIGH' region motif. Cys143, Cys146, Cys156, and Cys159 together coordinate Zn(2+). A 'KMSKS' region motif is present at residues 328–332 (KMSKS). Lys331 is an ATP binding site. A tRNA-binding domain is found at 573–674 (SFAKLDLRIA…EGARPGMRVK (102 aa)).

The protein belongs to the class-I aminoacyl-tRNA synthetase family. MetG type 1 subfamily. In terms of assembly, homodimer. Requires Zn(2+) as cofactor.

The protein localises to the cytoplasm. It carries out the reaction tRNA(Met) + L-methionine + ATP = L-methionyl-tRNA(Met) + AMP + diphosphate. Functionally, is required not only for elongation of protein synthesis but also for the initiation of all mRNA translation through initiator tRNA(fMet) aminoacylation. In Nitrosococcus oceani (strain ATCC 19707 / BCRC 17464 / JCM 30415 / NCIMB 11848 / C-107), this protein is Methionine--tRNA ligase.